A 345-amino-acid polypeptide reads, in one-letter code: Transcription initiation factor IIB (345 aa).

The segment at Ile-20–Ser-53 adopts a TFIIB-type zinc-finger fold. Zn(2+)-binding residues include Cys-24, Cys-27, Cys-45, and Cys-48. The segment covering Thr-65–Arg-78 has biased composition (basic and acidic residues). A disordered region spans residues Thr-65–Ser-93. Repeat copies occupy residues Leu-136–Asn-212 and Phe-242–Glu-318.

This sequence belongs to the TFIIB family. In terms of assembly, associates with TFIID-IIA (DA complex) to form TFIID-IIA-IIB (DAB-complex) which is then recognized by polymerase II.

It localises to the nucleus. Its function is as follows. General factor that plays a major role in the activation of eukaryotic genes transcribed by RNA polymerase II. This Saccharomyces cerevisiae (strain ATCC 204508 / S288c) (Baker's yeast) protein is Transcription initiation factor IIB (SUA7).